We begin with the raw amino-acid sequence, 483 residues long: Probable glycosyltransferase 6 (483 aa).

Residues 1–40 are Cytoplasmic-facing; it reads MAASETAPFGVSAASKGGGGVAGARAQHGQLAVAGRVHDA. The helical; Signal-anchor for type II membrane protein transmembrane segment at 41–61 threads the bilayer; that stretch reads LVFAAGAVAAVLVLLATASFL. At 62–483 the chain is on the lumenal side; the sequence is SPMPVTNLVA…PLPFDYPAAR (422 aa). Asparagine 144 carries N-linked (GlcNAc...) asparagine glycosylation.

The protein belongs to the glycosyltransferase 34 family.

The protein resides in the golgi apparatus membrane. Its function is as follows. Probable glycosyltransferase that may be involved in the biosynthesis of xyloglucan. This is Probable glycosyltransferase 6 from Oryza sativa subsp. indica (Rice).